The primary structure comprises 34 residues: Photosystem II reaction center protein M (34 aa).

Residues 7-27 (GFVASLMFILVPAIFLIVLYI) form a helical membrane-spanning segment.

The protein belongs to the PsbM family. As to quaternary structure, PSII is composed of 1 copy each of membrane proteins PsbA, PsbB, PsbC, PsbD, PsbE, PsbF, PsbH, PsbI, PsbJ, PsbK, PsbL, PsbM, PsbT, PsbX, PsbY, PsbZ, Psb30/Ycf12, peripheral proteins PsbO, CyanoQ (PsbQ), PsbU, PsbV and a large number of cofactors. It forms dimeric complexes.

The protein resides in the cellular thylakoid membrane. In terms of biological role, one of the components of the core complex of photosystem II (PSII). PSII is a light-driven water:plastoquinone oxidoreductase that uses light energy to abstract electrons from H(2)O, generating O(2) and a proton gradient subsequently used for ATP formation. It consists of a core antenna complex that captures photons, and an electron transfer chain that converts photonic excitation into a charge separation. This subunit is found at the monomer-monomer interface. The chain is Photosystem II reaction center protein M from Synechococcus sp. (strain CC9605).